A 533-amino-acid polypeptide reads, in one-letter code: Flavin-dependent halogenase armH4 (533 aa).

The FAD site is built by G16, A19, and E49. Positions 337 and 338 each coordinate chloride. V339 serves as a coordination point for FAD.

The protein belongs to the flavin-dependent halogenase family.

It carries out the reaction melleolide F + FADH2 + chloride + O2 = 6'-chloromelleolide F + FAD + 2 H2O + H(+). The enzyme catalyses melleolide F + bromide + FADH2 + O2 = 6'-bromomelleolide F + FAD + 2 H2O. In terms of biological role, flavin-dependent halogenase involved in the biosynthesis of melleolides, a range of antifungal and phytotoxic polyketide derivatives composed of an orsellinic acid (OA) moiety esterified to various sesquiterpene alcohols. The halogenase catalyzes the transfer of a single chlorine atom to the melleolide backbone, resulting in a 6'-chloromelleolide product. The enzyme acts on free substrate and does not depend on carrier-protein-dependent acceptor molecules. Can also catalyze the transfer of a single bromine atom to the melleolide backbone in vitro. The chain is Flavin-dependent halogenase armH4 from Armillaria mellea (Honey mushroom).